The chain runs to 445 residues: Sodium/proton-dependent alanine carrier protein (445 aa).

9 consecutive transmembrane segments (helical) span residues 41–61 (IAYG…IGAA), 103–123 (AAII…SIAD), 129–149 (FGIP…FTIF), 159–179 (AEIV…AIIA), 188–208 (VFGL…GILG), 249–269 (AFSI…MILF), 304–324 (TLFP…FAFT), 349–369 (AFFA…VKTA), and 375–395 (MGDI…LLLF).

This sequence belongs to the alanine or glycine:cation symporter (AGCS) (TC 2.A.25) family. Post-translationally, the N-terminus is blocked.

It localises to the cell membrane. Mediates the active transport of alanine, driven by either an H(+) or Na(+) gradient. This is Sodium/proton-dependent alanine carrier protein from Bacillus sp. (strain PS3).